A 49-amino-acid polypeptide reads, in one-letter code: MRQTITLACAETGERLYLTSKNKRNTPEKLQLKKYSPKLRRRALFTEVK.

The protein belongs to the bacterial ribosomal protein bL33 family.

This chain is Large ribosomal subunit protein bL33D (rpmG4), found in Enterococcus faecalis (strain ATCC 700802 / V583).